Reading from the N-terminus, the 417-residue chain is Alpha-galactosidase (417 aa).

The first 55 residues, 1-55 (MARASSSSSPPSPRLLLLLLVAVAATLLPEAAALGNFTAESRGARWRSRRARRRA), serve as a signal peptide directing secretion. Residues W71, D106, D107, C156, K183, D185, W219, R236, and D240 each contribute to the alpha-D-galactose site. 2 disulfide bridges follow: C76-C108 and C156-C187. The Nucleophile role is filled by D185. Catalysis depends on D240, which acts as the Proton donor.

Belongs to the glycosyl hydrolase 27 family.

It carries out the reaction Hydrolysis of terminal, non-reducing alpha-D-galactose residues in alpha-D-galactosides, including galactose oligosaccharides, galactomannans and galactolipids.. The enzyme catalyses melibiose + H2O = D-galactose + D-glucose. The catalysed reaction is raffinose + H2O = sucrose + D-galactose. It catalyses the reaction stachyose + H2O = raffinose + D-galactose. It carries out the reaction alpha-D-Gal-(1-&gt;6)-beta-D-Man-(1-&gt;4)-beta-D-Man-(1-&gt;4)-D-Man + H2O = beta-D-Man-(1-&gt;4)-beta-D-Man-(1-&gt;4)-D-Man + D-galactose. The enzyme catalyses beta-D-Man-(1-&gt;4)-[alpha-D-Gal-(1-&gt;6)]-beta-D-Man-(1-&gt;4)-beta-D-Man-(1-&gt;4)-D-Man + H2O = beta-D-Man-(1-&gt;4)-beta-D-Man-(1-&gt;4)-beta-D-Man-(1-&gt;4)-D-Man + D-galactose. With respect to regulation, 1 mM Hg(2+) and Ag(2+) decrease activity by 98% and 96%, respectively. 1 mM Para-chloromercuribenzoic acid (PCMB) completely inhibits enzymatic activity. Its function is as follows. Hydrolyzes melibiose, raffinose and stachyose in the following decreasing order of reactivity: raffinose, melibiose, stachyose. Acts on both the terminal alpha-galactosyl residue and the side-chain alpha-galactosyl residue of the galactomanno-oligosaccharides. This is Alpha-galactosidase from Oryza sativa subsp. japonica (Rice).